The following is a 706-amino-acid chain: Termination factor NPH-I homolog (706 aa).

A Helicase ATP-binding domain is found at 62–227 (IGQGENTRGL…VPCFNMLSGR (166 aa)). Residue 75 to 82 (HQMGMGKT) coordinates ATP. A DEAH box motif is present at residues 168–171 (DEAH). The Helicase C-terminal domain occupies 417–599 (QCLQPLKVLE…HLNSAFRDLL (183 aa)).

This sequence belongs to the DEAD box helicase family. DEAH subfamily. In terms of assembly, part of the viral DNA-directed RNA polymerase that consists of 8 polII-like subunits (RPB1, RPB2, RPB3, RPB5, RPB6, RPB7, RPB9, RPB10), a capping enzyme and a termination factor.

It localises to the virion. Functionally, putative DNA-dependent ATPase required for providing the needed energy to achieve the termination of early transcripts. The polypeptide is Termination factor NPH-I homolog (African swine fever virus (isolate Tick/South Africa/Pretoriuskop Pr4/1996) (ASFV)).